Consider the following 277-residue polypeptide: MGRYNLTALRVRRTALATTQCGKPGTRQPWLDVLADIPPASILVRNQAPSHPVVKQRMRTVPGKSKPQLEIKSSAGRKQTSKKPSRIFQPKEIRYEEDQLRKEFFRDHPWELARPRVVLENDGNDHRRYNWQNIQQPGKKLDGESVVQRQLYLLNNVPDMSKGAAYEIARREFYQLRLQEDVERRVAQEEALATGAYFGPDMHTVGMELENQEYEKWKVWAEGENQAMEQRLAAFTGSTGPTEESGESEDEIPLIEEEDAIGASEESETEAPSGPPI.

Disordered regions lie at residues 48 to 85 and 232 to 277; these read APSH…KKPS and LAAF…GPPI. The segment covering 244–269 has biased composition (acidic residues); it reads ESGESEDEIPLIEEEDAIGASEESET.

This sequence belongs to the mitochondrion-specific ribosomal protein mS23 family. As to quaternary structure, component of the mitochondrial small ribosomal subunit.

The protein localises to the mitochondrion. The chain is Small ribosomal subunit protein mS23 (RSM25) from Ajellomyces capsulatus (strain NAm1 / WU24) (Darling's disease fungus).